We begin with the raw amino-acid sequence, 98 residues long: NADH-ubiquinone oxidoreductase chain 4L (98 aa).

3 helical membrane-spanning segments follow: residues 1–21, 29–49, and 61–81; these read MALT…GLLM, SLLC…LTIL, and IILL…LVMV.

This sequence belongs to the complex I subunit 4L family. In terms of assembly, core subunit of respiratory chain NADH dehydrogenase (Complex I) which is composed of 45 different subunits.

It localises to the mitochondrion inner membrane. It catalyses the reaction a ubiquinone + NADH + 5 H(+)(in) = a ubiquinol + NAD(+) + 4 H(+)(out). Functionally, core subunit of the mitochondrial membrane respiratory chain NADH dehydrogenase (Complex I) which catalyzes electron transfer from NADH through the respiratory chain, using ubiquinone as an electron acceptor. Part of the enzyme membrane arm which is embedded in the lipid bilayer and involved in proton translocation. The sequence is that of NADH-ubiquinone oxidoreductase chain 4L (MT-ND4L) from Pteropus dasymallus (Ryukyu flying fox).